The sequence spans 576 residues: Interleukin-1 receptor type 1 (576 aa).

The N-terminal stretch at 1-19 (MENMKVLLGLICLMVPLLS) is a signal peptide. Over 20 to 338 (LEIDVCTEYP…QLIYPVPDFK (319 aa)) the chain is Extracellular. Disulfide bonds link Cys25/Cys107, Cys46/Cys99, and Cys145/Cys199. Ig-like C2-type domains lie at 25–115 (CTEY…VTVT), 121–213 (PGLC…YPVT), and 229–329 (PVIL…AHVQ). N-linked (GlcNAc...) asparagine glycans are attached at residues Asn63, Asn103, Asn174, Asn236, Asn252, Asn266, and Asn300. Cys251 and Cys315 are disulfide-bonded. The helical transmembrane segment at 339-359 (NYLIGGFIILTATIVCCVCIY) threads the bilayer. At 360 to 576 (KVFKVDIVLW…LPAATHLPLG (217 aa)) the chain is on the cytoplasmic side. In terms of domain architecture, TIR spans 386 to 541 (KTYDAYILYP…RFWKNLRYQM (156 aa)). The active site involves Glu473. Phosphotyrosine is present on Tyr499. Thr556 carries the post-translational modification Phosphothreonine; by PKC.

The protein belongs to the interleukin-1 receptor family. The interleukin-1 receptor complex is a heterodimer of IL1R1 and IL1RAP. Interacts with PIK3R1. Interacts with IL1A. In terms of processing, a soluble form (sIL1R1) is probably produced by proteolytic cleavage at the cell surface (shedding). Post-translationally, rapidly phosphorylated on Tyr-499 in response to IL-1, which creates a SH2 binding site for the PI 3-kinase regulatory subunit PIK3R1. In terms of tissue distribution, isoform 2 is expressed in various brain tissues.

It localises to the membrane. The protein localises to the cell membrane. Its subcellular location is the secreted. It catalyses the reaction NAD(+) + H2O = ADP-D-ribose + nicotinamide + H(+). Functionally, receptor for IL1A, IL1B and IL1RN. After binding to interleukin-1 associates with the coreceptor IL1RAP to form the high affinity interleukin-1 receptor complex which mediates interleukin-1-dependent activation of NF-kappa-B, MAPK and other pathways. Signaling involves the recruitment of adapter molecules such as TOLLIP, MYD88, and IRAK1 or IRAK2 via the respective TIR domains of the receptor/coreceptor subunits. Binds ligands with comparable affinity and binding of antagonist IL1RN prevents association with IL1RAP to form a signaling complex. Involved in IL1B-mediated costimulation of IFNG production from T-helper 1 (Th1) cells. Unable to mediate canonical IL-1 signaling. Cooperates with IL1RAP isoform 3 to mediate IL1B-induced neuronal activity including IL1B-potentiated NMDA-induced calcium influx mediated by Akt kinase activation. In Mus musculus (Mouse), this protein is Interleukin-1 receptor type 1 (Il1r1).